Here is a 54-residue protein sequence, read N- to C-terminus: UPF0391 membrane protein Rmet_0093 (54 aa).

2 consecutive transmembrane segments (helical) span residues 5 to 25 and 30 to 50; these read ALVF…GIAA and IAKI…VMGL.

This sequence belongs to the UPF0391 family.

The protein resides in the cell membrane. In Cupriavidus metallidurans (strain ATCC 43123 / DSM 2839 / NBRC 102507 / CH34) (Ralstonia metallidurans), this protein is UPF0391 membrane protein Rmet_0093.